A 396-amino-acid chain; its full sequence is Putative N(4)-(beta-N-acetylglucosaminyl)-L-asparaginase GE19290 (396 aa).

A signal peptide spans 1-23 (MKRHLKACLWVLCFASTALSSLA). 2 cysteine pairs are disulfide-bonded: cysteine 100–cysteine 105 and cysteine 199–cysteine 215. The active-site Nucleophile is threonine 246. Substrate is bound by residues 274–277 (RVGD) and 297–300 (TGDG). An intrachain disulfide couples cysteine 357 to cysteine 384.

The protein belongs to the Ntn-hydrolase family. In terms of assembly, heterotetramer of two alpha and two beta chains arranged as a dimer of alpha/beta heterodimers. Post-translationally, cleaved into an alpha and beta chain by autocatalysis; this activates the enzyme. The N-terminal residue of the beta subunit is responsible for the nucleophile hydrolase activity.

It carries out the reaction N(4)-(beta-N-acetyl-D-glucosaminyl)-L-asparagine + H2O = N-acetyl-beta-D-glucosaminylamine + L-aspartate + H(+). In terms of biological role, cleaves the GlcNAc-Asn bond which joins oligosaccharides to the peptide of asparagine-linked glycoproteins. The protein is Putative N(4)-(beta-N-acetylglucosaminyl)-L-asparaginase GE19290 of Drosophila yakuba (Fruit fly).